The following is a 493-amino-acid chain: Glutamyl-tRNA(Gln) amidotransferase subunit A (493 aa).

Catalysis depends on charge relay system residues K79 and S159. S183 serves as the catalytic Acyl-ester intermediate.

Belongs to the amidase family. GatA subfamily. In terms of assembly, heterotrimer of A, B and C subunits.

The catalysed reaction is L-glutamyl-tRNA(Gln) + L-glutamine + ATP + H2O = L-glutaminyl-tRNA(Gln) + L-glutamate + ADP + phosphate + H(+). Functionally, allows the formation of correctly charged Gln-tRNA(Gln) through the transamidation of misacylated Glu-tRNA(Gln) in organisms which lack glutaminyl-tRNA synthetase. The reaction takes place in the presence of glutamine and ATP through an activated gamma-phospho-Glu-tRNA(Gln). This is Glutamyl-tRNA(Gln) amidotransferase subunit A from Brucella canis (strain ATCC 23365 / NCTC 10854 / RM-666).